Here is a 287-residue protein sequence, read N- to C-terminus: MMKNILAIQSHVVYGHAGNSAAEFPMRRLGANVWPLNTVQFSNHTQYGKWTGCVMPPSHLTEIVQGIAAIDKLHTCDAVLSGYLGSAEQGEHILGIVRQVKAANPQAKYFCDPVMGHPEKGCIVAPGVAEFHVRHGLPASDIIAPNLVELEILCEHPVNNVEEAVLAARELIAQGPQIVLVKHLARAGYSRDRFEMLLVTADEAWHISRPLVDFGMRQPVGVGDVTSGLLLVKLLQGATLQEALEHVTAAVYEIMVTTKAMQEYELQVVAAQDRIAKPEHYFSATKL.

Residues S10 and 45-46 (TQ) each bind substrate. Residues D112, A144, E149, K182, and 209 to 212 (RPLV) contribute to the ATP site. D224 contacts substrate.

The protein belongs to the pyridoxine kinase family. PdxY subfamily. In terms of assembly, homodimer. The cofactor is Mg(2+).

The enzyme catalyses pyridoxal + ATP = pyridoxal 5'-phosphate + ADP + H(+). Its pathway is cofactor metabolism; pyridoxal 5'-phosphate salvage; pyridoxal 5'-phosphate from pyridoxal: step 1/1. Pyridoxal kinase involved in the salvage pathway of pyridoxal 5'-phosphate (PLP). Catalyzes the phosphorylation of pyridoxal to PLP. This chain is Pyridoxal kinase PdxY, found in Escherichia coli O157:H7.